The sequence spans 241 residues: 1-(5-phosphoribosyl)-5-[(5-phosphoribosylamino)methylideneamino] imidazole-4-carboxamide isomerase (241 aa).

The Proton acceptor role is filled by aspartate 8. Aspartate 130 functions as the Proton donor in the catalytic mechanism.

It belongs to the HisA/HisF family.

The protein resides in the cytoplasm. It carries out the reaction 1-(5-phospho-beta-D-ribosyl)-5-[(5-phospho-beta-D-ribosylamino)methylideneamino]imidazole-4-carboxamide = 5-[(5-phospho-1-deoxy-D-ribulos-1-ylimino)methylamino]-1-(5-phospho-beta-D-ribosyl)imidazole-4-carboxamide. It participates in amino-acid biosynthesis; L-histidine biosynthesis; L-histidine from 5-phospho-alpha-D-ribose 1-diphosphate: step 4/9. The sequence is that of 1-(5-phosphoribosyl)-5-[(5-phosphoribosylamino)methylideneamino] imidazole-4-carboxamide isomerase from Leptospira borgpetersenii serovar Hardjo-bovis (strain L550).